The following is a 185-amino-acid chain: Pericyclase pydY (185 aa).

It belongs to the pericyclase pydY family.

The protein operates within mycotoxin biosynthesis. In terms of biological role, pericyclase; part of the gene cluster that mediates the biosynthesis of pyrrocidines, fungal natural products containing a macrocyclic para-cyclophane connected to a decahydrofluorene ring system that show potent antibiotic activities toward Gram-negative bacteria. Within the pathway, pydY is involved in the late Diels-Alder cycloaddition step that leads to the formation of the decahydrofluorene core. The pathway begins with the PKS-NRPS pydA which, with the help of the trans-enoyl reductase pydC, synthesizes the polyketide-tyrosyl acyl thioester product which can be reductively off-loaded by the terminal reductase (R) domain in pydA. The alpha/beta hydrolase pydG is then required to catalyze the subsequent Knoevenagel condensation that affords the 3-pyrrolin-2-one ring, whereas the four proteins pydB, pydE, pydX and pydZ then function synergistically to form the cyclophane. PydB and the membrane-bound pydX and pydZ are lipid-binding proteins that can sequester and mold the pdyG product into the inverse S-shape. Binding of the medium chain reductase pydE to the complex would trigger the cascade oxidative cyclization. PydY is involved in the Diels-Alder cycloaddition that forms the decahydrofluorene core. Additional non-enzymatic hydroxylation yields pyrrocidine A2 which can be further reduced into pyrrocidine B by an endogenous reductase. This chain is Pericyclase pydY, found in Acremonium sp.